The primary structure comprises 188 residues: Protein GrpE 2 (188 aa).

It belongs to the GrpE family. Homodimer.

It localises to the cytoplasm. Its function is as follows. Participates actively in the response to hyperosmotic and heat shock by preventing the aggregation of stress-denatured proteins, in association with DnaK and GrpE. It is the nucleotide exchange factor for DnaK and may function as a thermosensor. Unfolded proteins bind initially to DnaJ; upon interaction with the DnaJ-bound protein, DnaK hydrolyzes its bound ATP, resulting in the formation of a stable complex. GrpE releases ADP from DnaK; ATP binding to DnaK triggers the release of the substrate protein, thus completing the reaction cycle. Several rounds of ATP-dependent interactions between DnaJ, DnaK and GrpE are required for fully efficient folding. This Buchnera aphidicola subsp. Acyrthosiphon pisum (strain APS) (Acyrthosiphon pisum symbiotic bacterium) protein is Protein GrpE 2.